Consider the following 413-residue polypeptide: Imidazolonepropionase (413 aa).

Fe(3+) is bound by residues H79 and H81. The Zn(2+) site is built by H79 and H81. R88, Y151, and H184 together coordinate 4-imidazolone-5-propanoate. Y151 is a binding site for N-formimidoyl-L-glutamate. Fe(3+) is bound at residue H248. H248 serves as a coordination point for Zn(2+). A 4-imidazolone-5-propanoate-binding site is contributed by E251. Residue D322 coordinates Fe(3+). D322 serves as a coordination point for Zn(2+). Residues N324 and G326 each coordinate N-formimidoyl-L-glutamate. A 4-imidazolone-5-propanoate-binding site is contributed by S327.

The protein belongs to the metallo-dependent hydrolases superfamily. HutI family. Zn(2+) is required as a cofactor. Requires Fe(3+) as cofactor.

Its subcellular location is the cytoplasm. The catalysed reaction is 4-imidazolone-5-propanoate + H2O = N-formimidoyl-L-glutamate. The protein operates within amino-acid degradation; L-histidine degradation into L-glutamate; N-formimidoyl-L-glutamate from L-histidine: step 3/3. In terms of biological role, catalyzes the hydrolytic cleavage of the carbon-nitrogen bond in imidazolone-5-propanoate to yield N-formimidoyl-L-glutamate. It is the third step in the universal histidine degradation pathway. The sequence is that of Imidazolonepropionase from Fusobacterium nucleatum subsp. nucleatum (strain ATCC 25586 / DSM 15643 / BCRC 10681 / CIP 101130 / JCM 8532 / KCTC 2640 / LMG 13131 / VPI 4355).